The chain runs to 393 residues: Double-stranded RNA-binding protein 5 (393 aa).

2 consecutive DRBM domains span residues 1–70 (MYKN…VLSS) and 87–155 (IYKN…SLKK). 2 disordered regions span residues 220–251 (ASSS…KSSK) and 335–371 (NPNL…QEKK). Over residues 347 to 361 (VNEFTSSNNSCSVLN) the composition is skewed to polar residues.

Heterodimer with DRB1, DRB2 or DRB4. Interacts with DCL1 and DCL3. As to expression, expressed in the shoot apical meristem (SAM).

Its function is as follows. Binds double-stranded RNA. May be involved in RNA-mediated silencing. The chain is Double-stranded RNA-binding protein 5 (DRB5) from Arabidopsis thaliana (Mouse-ear cress).